The sequence spans 147 residues: Chorion class B protein B.L1 (147 aa).

Residues 1–38 are left arm; sequence IGCGRGCGGRGYGGLGYGGLGYGGLGYGGLGGGCGRGF. 4 consecutive repeat copies span residues 11-15, 16-20, 21-25, and 26-30. The interval 11 to 30 is 4 X 5 AA tandem repeats of G-Y-G-G-L; it reads GYGGLGYGGLGYGGLGYGGL. The central domain stretch occupies residues 39–107; the sequence is SGGGLPVATA…GNGAVGITRE (69 aa). The right arm (Gly-rich tandem repeats) stretch occupies residues 108 to 147; the sequence is GGLGYGAGYGGGYGLGYGGYGGGYGLGYGGYGGCGCGCGY.

It belongs to the chorion protein family.

Functionally, this protein is one of many from the eggshell of the silk moth. This chain is Chorion class B protein B.L1, found in Bombyx mori (Silk moth).